The primary structure comprises 227 residues: Lipoprotein-releasing system ATP-binding protein LolD (227 aa).

The ABC transporter domain maps to 6 to 227 (LVLDDIQKSY…RLDEGVLVSA (222 aa)). 43–50 (APSGAGKS) is a binding site for ATP.

Belongs to the ABC transporter superfamily. Lipoprotein translocase (TC 3.A.1.125) family. The complex is composed of two ATP-binding proteins (LolD) and two transmembrane proteins (LolC and LolE).

Its subcellular location is the cell inner membrane. In terms of biological role, part of the ABC transporter complex LolCDE involved in the translocation of mature outer membrane-directed lipoproteins, from the inner membrane to the periplasmic chaperone, LolA. Responsible for the formation of the LolA-lipoprotein complex in an ATP-dependent manner. The polypeptide is Lipoprotein-releasing system ATP-binding protein LolD (Jannaschia sp. (strain CCS1)).